The following is a 351-amino-acid chain: V-type proton ATPase subunit d1 (351 aa).

This sequence belongs to the V-ATPase V0D/AC39 subunit family. As to quaternary structure, V-ATPase is a heteromultimeric enzyme composed of a peripheral catalytic V1 complex (components A to H) attached to an integral membrane V0 proton pore complex (components: a, c, c'', d and e).

The protein resides in the vacuole membrane. Functionally, subunit of the integral membrane V0 complex of vacuolar ATPase. Vacuolar ATPase is responsible for acidifying a variety of intracellular compartments in eukaryotic cells, thus providing most of the energy required for transport processes in the vacuolar system. This is V-type proton ATPase subunit d1 (VHA-d1) from Arabidopsis thaliana (Mouse-ear cress).